The following is a 235-amino-acid chain: Uridylate kinase (235 aa).

An ATP-binding site is contributed by 9–12 (KLSG). G51 contacts UMP. The ATP site is built by G52 and R56. UMP-binding positions include D71 and 132 to 139 (TGNPYFTT). Positions 159, 165, and 168 each coordinate ATP.

This sequence belongs to the UMP kinase family. In terms of assembly, homohexamer.

It is found in the cytoplasm. The enzyme catalyses UMP + ATP = UDP + ADP. The protein operates within pyrimidine metabolism; CTP biosynthesis via de novo pathway; UDP from UMP (UMPK route): step 1/1. Its activity is regulated as follows. Inhibited by UTP. Catalyzes the reversible phosphorylation of UMP to UDP. The sequence is that of Uridylate kinase from Flavobacterium psychrophilum (strain ATCC 49511 / DSM 21280 / CIP 103535 / JIP02/86).